We begin with the raw amino-acid sequence, 822 residues long: Tyrosine-protein kinase Fer (822 aa).

Positions 1–259 (MGFGSDLKNS…SVEQIDPSTE (259 aa)) constitute an F-BAR domain. An important for interaction with membranes containing phosphoinositides region spans residues 1–300 (MGFGSDLKNS…QANEIMWNNL (300 aa)). Coiled coils occupy residues 123–185 (AEMI…HNQY) and 301–390 (TAES…KVQE). At Y402 the chain carries Phosphotyrosine. At S434 the chain carries Phosphoserine. One can recognise an SH2 domain in the interval 460-550 (WYHGAIPRIE…KSGVVLLNPI (91 aa)). The Protein kinase domain occupies 563–816 (VILGELLGKG…FSELQKELTI (254 aa)). Residues 569–577 (LGKGNFGEV) and K591 each bind ATP. Y615 is subject to Phosphotyrosine; by autocatalysis. D684 (proton acceptor) is an active-site residue. Y714 carries the phosphotyrosine; by autocatalysis modification.

The protein belongs to the protein kinase superfamily. Tyr protein kinase family. Fes/fps subfamily. Homotrimer. Interacts with ARHGDIA, IRS1, JAK1, NRP1, PIK3R1, PLEC and TMF1. Interacts with PPP1CA and regulates its phosphorylation at 'Thr-320'. Interacts with CTNND1, EGFR, FLT3, PECAM1, PDGFR and STAT3. Interacts (via SH2 domain) with CTTN. Interacts with HSP90; this stabilizes phosphorylated FER and protects FER against proteasomal degradation. Component of a complex that contains at least FER, CTTN and PTK2/FAK1. In terms of processing, autophosphorylated. Polyubiquitinated; this leads to proteasomal degradation. As to expression, isoform 1 is detected in normal colon and in fibroblasts (at protein level). Isoform 3 is detected in normal testis, in colon carcinoma-derived metastases in lung, liver and ovary, and in colon carcinoma and hepato carcinoma cell lines (at protein level). Isoform 3 is not detected in normal colon or in normal fibroblasts (at protein level). Widely expressed.

The protein localises to the cytoplasm. It is found in the cytoskeleton. The protein resides in the cell membrane. It localises to the cell projection. Its subcellular location is the cell junction. The protein localises to the membrane. It is found in the nucleus. The protein resides in the cell cortex. It carries out the reaction L-tyrosyl-[protein] + ATP = O-phospho-L-tyrosyl-[protein] + ADP + H(+). Its activity is regulated as follows. Activated by phosphatidic acid binding. Activated by hydrogen peroxide (in vitro). Activated by reactive oxygen species (ROS). Its function is as follows. Tyrosine-protein kinase that acts downstream of cell surface receptors for growth factors and plays a role in the regulation of the actin cytoskeleton, microtubule assembly, lamellipodia formation, cell adhesion, cell migration and chemotaxis. Acts downstream of EGFR, KIT, PDGFRA and PDGFRB. Acts downstream of EGFR to promote activation of NF-kappa-B and cell proliferation. May play a role in the regulation of the mitotic cell cycle. Plays a role in the insulin receptor signaling pathway and in activation of phosphatidylinositol 3-kinase. Acts downstream of the activated FCER1 receptor and plays a role in FCER1 (high affinity immunoglobulin epsilon receptor)-mediated signaling in mast cells. Plays a role in the regulation of mast cell degranulation. Plays a role in leukocyte recruitment and diapedesis in response to bacterial lipopolysaccharide (LPS). Plays a role in synapse organization, trafficking of synaptic vesicles, the generation of excitatory postsynaptic currents and neuron-neuron synaptic transmission. Plays a role in neuronal cell death after brain damage. Phosphorylates CTTN, CTNND1, PTK2/FAK1, GAB1, PECAM1 and PTPN11. May phosphorylate JUP and PTPN1. Can phosphorylate STAT3, but the biological relevance of this depends on cell type and stimulus. The chain is Tyrosine-protein kinase Fer (FER) from Homo sapiens (Human).